The primary structure comprises 163 residues: Phosphopantetheine adenylyltransferase (163 aa).

Serine 10 provides a ligand contact to substrate. ATP contacts are provided by residues 10–11 and histidine 18; that span reads SF. Substrate is bound by residues lysine 42, leucine 74, and arginine 88. ATP-binding positions include 89–91, glutamate 99, and 124–130; these read GLR and YSFLSSS.

The protein belongs to the bacterial CoaD family. As to quaternary structure, homohexamer. Requires Mg(2+) as cofactor.

It is found in the cytoplasm. It carries out the reaction (R)-4'-phosphopantetheine + ATP + H(+) = 3'-dephospho-CoA + diphosphate. Its pathway is cofactor biosynthesis; coenzyme A biosynthesis; CoA from (R)-pantothenate: step 4/5. Its function is as follows. Reversibly transfers an adenylyl group from ATP to 4'-phosphopantetheine, yielding dephospho-CoA (dPCoA) and pyrophosphate. The sequence is that of Phosphopantetheine adenylyltransferase from Bacillus cereus (strain G9842).